The following is a 350-amino-acid chain: Purine-binding protein BAB2_0673 (350 aa).

An N-terminal signal peptide occupies residues 1-17; sequence MVIATVAGFMLGGAAHA. Positions 36, 185, and 211 each coordinate adenine.

This sequence belongs to the BMP lipoprotein family.

Binds adenine and probably also other purines, such as guanine. May play a role in adenine and guanine uptake. May be part of an ABC-type uptake system for adenine and similar ligands. This chain is Purine-binding protein BAB2_0673, found in Brucella abortus (strain 2308).